We begin with the raw amino-acid sequence, 507 residues long: Putative UDP-glucuronosyltransferase ugt-60 (507 aa).

The N-terminal stretch at 1–15 is a signal peptide; it reads MYLPIFCIFLSVVDS. N-linked (GlcNAc...) asparagine glycosylation is present at N312. The chain crosses the membrane as a helical span at residues 379–399; the sequence is YNSFLEAAQAGIPAVLMPLFA.

It belongs to the UDP-glycosyltransferase family.

Its subcellular location is the membrane. The catalysed reaction is glucuronate acceptor + UDP-alpha-D-glucuronate = acceptor beta-D-glucuronoside + UDP + H(+). In Caenorhabditis elegans, this protein is Putative UDP-glucuronosyltransferase ugt-60 (ugt-60).